The following is a 346-amino-acid chain: NADH-ubiquinone oxidoreductase chain 2 (346 aa).

Helical transmembrane passes span 25 to 45 (NLLLMWVGLEMSLLAIIPLLA), 56 to 76 (ATKYFLTQATASMIILLVIIL), 94 to 114 (LLNMMLISLAMKLGLAPFHYW), 122 to 142 (IPLHIGLILLTWQKIAPLSIL), 148 to 168 (LLNPTITTILAISSVFVGAWG), 178 to 198 (IMAYSSIAHMGWMTAILPYNP), 200 to 220 (LTLLNLTIYILLTVPMFITLM), 240 to 260 (ILTMTSIILLSLGGLPPLTGF), 278 to 298 (LSTLMAIMALLSLFFYTRLIY), and 325 to 345 (FILPTLTVLSTLTLPLSSQLI).

This sequence belongs to the complex I subunit 2 family. Core subunit of respiratory chain NADH dehydrogenase (Complex I) which is composed of 45 different subunits. Interacts with TMEM242.

It localises to the mitochondrion inner membrane. The catalysed reaction is a ubiquinone + NADH + 5 H(+)(in) = a ubiquinol + NAD(+) + 4 H(+)(out). In terms of biological role, core subunit of the mitochondrial membrane respiratory chain NADH dehydrogenase (Complex I) which catalyzes electron transfer from NADH through the respiratory chain, using ubiquinone as an electron acceptor. Essential for the catalytic activity and assembly of complex I. In Rattus norvegicus (Rat), this protein is NADH-ubiquinone oxidoreductase chain 2.